The following is a 252-amino-acid chain: Ribosomal RNA small subunit methyltransferase J (252 aa).

S-adenosyl-L-methionine-binding positions include 105–106 (RD), 121–122 (ER), and aspartate 175.

This sequence belongs to the methyltransferase superfamily. RsmJ family.

The protein resides in the cytoplasm. The enzyme catalyses guanosine(1516) in 16S rRNA + S-adenosyl-L-methionine = N(2)-methylguanosine(1516) in 16S rRNA + S-adenosyl-L-homocysteine + H(+). In terms of biological role, specifically methylates the guanosine in position 1516 of 16S rRNA. This chain is Ribosomal RNA small subunit methyltransferase J, found in Pasteurella multocida (strain Pm70).